We begin with the raw amino-acid sequence, 269 residues long: Regulating synaptic membrane exocytosis protein 4 (269 aa).

The C2 domain occupies 115-233 (PMGDVEIGLQ…DLTTLAVGWY (119 aa)). Phosphoserine occurs at positions 254 and 257.

In terms of assembly, binds PPFIA3. Does not bind RAB3.

The protein resides in the synapse. Its function is as follows. Regulates synaptic membrane exocytosis. This Homo sapiens (Human) protein is Regulating synaptic membrane exocytosis protein 4 (RIMS4).